Here is a 63-residue protein sequence, read N- to C-terminus: Small ribosomal subunit protein eS31 (63 aa).

Residues Cys31, Cys34, Cys50, and Cys53 each contribute to the Zn(2+) site. Residues Cys31–Cys53 form a C4-type zinc finger.

Belongs to the eukaryotic ribosomal protein eS31 family. Part of the 30S ribosomal subunit. Requires Zn(2+) as cofactor.

The polypeptide is Small ribosomal subunit protein eS31 (Sulfurisphaera tokodaii (strain DSM 16993 / JCM 10545 / NBRC 100140 / 7) (Sulfolobus tokodaii)).